A 503-amino-acid chain; its full sequence is Cysteine desulfurase, mitochondrial (503 aa).

The N-terminal 27 residues, 1-27 (MSNIAPQVLRHASRACSRRLSLSASLV), are a transit peptide targeting the mitochondrion. Residues 34 to 50 (RTVTGSGSGGRRYVSGS) are compositionally biased toward low complexity. Positions 34 to 58 (RTVTGSGSGGRRYVSGSQRHNAQAQ) are disordered. Residues 172-173 (AT), Asn-254, Gln-282, and 302-304 (SGH) contribute to the pyridoxal 5'-phosphate site. Lys-305 carries the post-translational modification N6-(pyridoxal phosphate)lysine. Residue Thr-342 coordinates pyridoxal 5'-phosphate. Cys-427 serves as the catalytic Cysteine persulfide intermediate. Position 427 (Cys-427) interacts with [2Fe-2S] cluster.

This sequence belongs to the class-V pyridoxal-phosphate-dependent aminotransferase family. NifS/IscS subfamily. Requires pyridoxal 5'-phosphate as cofactor.

The protein resides in the mitochondrion. The enzyme catalyses (sulfur carrier)-H + L-cysteine = (sulfur carrier)-SH + L-alanine. Its function is as follows. Catalyzes the removal of elemental sulfur from cysteine to produce alanine. It supplies the inorganic sulfur for iron-sulfur (Fe-S) clusters. Plays a role in both tRNA-processing and mitochondrial metabolism. Involved in the 2-thio-modification of both 5-carboxymethylaminomethyl-2-thiouridine in mitochondrial tRNAs and 5-methoxycarbonylmethyl-2-thiouridine (mcm5s2U) in cytoplasmic tRNAs. This is Cysteine desulfurase, mitochondrial from Arthroderma benhamiae (strain ATCC MYA-4681 / CBS 112371) (Trichophyton mentagrophytes).